Consider the following 347-residue polypeptide: Phosphate acyltransferase (347 aa).

The protein belongs to the PlsX family. As to quaternary structure, homodimer. Probably interacts with PlsY.

The protein resides in the cytoplasm. The catalysed reaction is a fatty acyl-[ACP] + phosphate = an acyl phosphate + holo-[ACP]. The protein operates within lipid metabolism; phospholipid metabolism. Functionally, catalyzes the reversible formation of acyl-phosphate (acyl-PO(4)) from acyl-[acyl-carrier-protein] (acyl-ACP). This enzyme utilizes acyl-ACP as fatty acyl donor, but not acyl-CoA. This Methylobacillus flagellatus (strain ATCC 51484 / DSM 6875 / VKM B-1610 / KT) protein is Phosphate acyltransferase.